Here is a 177-residue protein sequence, read N- to C-terminus: PLAC8-like protein 1 (177 aa).

It belongs to the cornifelin family.

The polypeptide is PLAC8-like protein 1 (Plac8l1) (Mus musculus (Mouse)).